The following is a 100-amino-acid chain: Small ribosomal subunit protein uS14c (100 aa).

Residues 1–22 are disordered; sequence MARKGLIQRENKRQKLEQKYHS. A compositionally biased stretch (basic and acidic residues) spans 7 to 20; sequence IQRENKRQKLEQKY.

The protein belongs to the universal ribosomal protein uS14 family. Part of the 30S ribosomal subunit.

The protein localises to the plastid. It localises to the chloroplast. Functionally, binds 16S rRNA, required for the assembly of 30S particles. The protein is Small ribosomal subunit protein uS14c of Daucus carota (Wild carrot).